Here is a 177-residue protein sequence, read N- to C-terminus: MNMCTDGKKYHSTATSAAVGASAPGVPDARAIAAICEQLRQHVADLGVLYIKLHNYHWHIYGIEFKQVHELLEEYYVSVTEAFDTIAERLLQLGAQAPASMAEYLALSGIAEETEKEITIVSALARVKRDFEYLSTRFSQTQVLAAESGDAVTDGIITDILRTLGKAIWMLGATLKA.

The protein belongs to the Dps family. As to quaternary structure, homodecamer; either linked or stabilized by disulfide bonds.

Functionally, may play an important structural role in the outer membrane. This Treponema pallidum (strain Nichols) protein is Antigen TpF1 (tpf1).